The chain runs to 438 residues: Glutamyl-tRNA reductase (438 aa).

Residues T49–R52, S109, E114–Q116, and Q120 contribute to the substrate site. Catalysis depends on C50, which acts as the Nucleophile. G198–S203 is an NADP(+) binding site.

It belongs to the glutamyl-tRNA reductase family. Homodimer.

It carries out the reaction (S)-4-amino-5-oxopentanoate + tRNA(Glu) + NADP(+) = L-glutamyl-tRNA(Glu) + NADPH + H(+). It participates in porphyrin-containing compound metabolism; protoporphyrin-IX biosynthesis; 5-aminolevulinate from L-glutamyl-tRNA(Glu): step 1/2. Its pathway is porphyrin-containing compound metabolism; chlorophyll biosynthesis. Catalyzes the NADPH-dependent reduction of glutamyl-tRNA(Glu) to glutamate 1-semialdehyde (GSA). The protein is Glutamyl-tRNA reductase of Synechococcus sp. (strain WH7803).